Here is a 1340-residue protein sequence, read N- to C-terminus: Lysine-specific demethylase ELF6 (1340 aa).

The region spanning 16–57 is the JmjN domain; that stretch reads APVFRPTDTEFADPIAYISKIEKEASAFGICKIIPPLPKPSK. The segment at 195–245 is disordered; it reads QRKRRGRGFYQRKTENNDPSGKNGEKSSPEVEKAPLASTSLSSQDSSKQKN. Over residues 217–227 the composition is skewed to basic and acidic residues; the sequence is NGEKSSPEVEK. The JmjC domain occupies 262-428; it reads NSSWNLQMIA…VAKEAAVRRA (167 aa). The Fe cation site is built by histidine 305, glutamate 307, and histidine 396. Positions 818–825 match the Nuclear localization signal 1 motif; it reads GKKEEKII. A disordered region spans residues 1092-1225; the sequence is GEPLESSDIL…SRQQEVPTTT (134 aa). The segment covering 1099–1115 has biased composition (polar residues); that stretch reads DILSSSNGDEASSNGLQ. The span at 1124–1133 shows a compositional bias: low complexity; the sequence is ESEVSSSENT. The segment covering 1188–1201 has biased composition (basic and acidic residues); sequence SLKHTETSDEEKKP. A compositionally biased stretch (polar residues) spans 1215-1225; that stretch reads GSRQQEVPTTT. 4 C2H2-type zinc fingers span residues 1228 to 1250, 1251 to 1275, 1281 to 1305, and 1311 to 1337; these read NRCYLEGCKMTFESKAKLQTHKR, NRCTHEGCGKKFRAHKYLVLHQRVH, FECSWKGCSMTFKWQWARTEHLRLH, and YICKVDGCGLSFRFVSDYSRHRRKTMH. The Zn(2+) site is built by cysteine 1230, cysteine 1235, histidine 1248, cysteine 1253, cysteine 1258, histidine 1265, histidine 1271, histidine 1275, cysteine 1283, cysteine 1288, histidine 1301, histidine 1305, cysteine 1313, cysteine 1318, histidine 1331, and histidine 1337. A Nuclear localization signal 2 motif is present at residues 1248 to 1255; the sequence is HKRNRCTH. A DNA-binding region spans residues 1260 to 1333; the sequence is KKFRAHKYLV…FVSDYSRHRR (74 aa).

The protein belongs to the JHDM3 histone demethylase family. Interacts with BZR2 (via N-terminus). In terms of tissue distribution, expressed at low levels in seedlings, cotyledons and leaves. Detected in inflorescences, stems, roots and siliques but not in shoot apical meristems or root tips. Accumulates in flowers and embryos.

It localises to the nucleus. It catalyses the reaction N(6),N(6),N(6)-trimethyl-L-lysyl(27)-[histone H3] + 2-oxoglutarate + O2 = N(6),N(6)-dimethyl-L-lysyl(27)-[histone H3] + formaldehyde + succinate + CO2. The enzyme catalyses N(6),N(6)-dimethyl-L-lysyl(27)-[histone H3] + 2-oxoglutarate + O2 = N(6)-methyl-L-lysyl(27)-[histone H3] + formaldehyde + succinate + CO2. Its function is as follows. Histone demethylase that demethylates 'Lys-27' (H3K27me) of histone H3, thus acting as a positive regulator of gene expression. Demethylates tri-methylated (H3K27me3) and di-methylated (H3K27me2) H3K27me. Inactive on H3K27me1, H3K4me3, H3K9me2 and H3K36me3. Acts as a repressor of the photoperiodic flowering pathway and of FT. May also be active on H3K4me. Binds around the transcription start site of the FT locus. Required for epigenetic reprogramming by resetting the expression of the floral repressor FLC locus, thus aluviating cold-mediated FLC epigenetically silencing occurring during vernalization and preventing inapropriate epigenetic states inheritence. Together with REF6, required for H3K27me3 resetting (especially in constitutive heterochromatin within the pericentromeric regions) and transgenerational inheritance of histone marks, thus acting in safeguarding genome and epigenome integrity during sexual reproduction. The protein is Lysine-specific demethylase ELF6 of Arabidopsis thaliana (Mouse-ear cress).